Here is a 154-residue protein sequence, read N- to C-terminus: MPKQIEIFTDGSCLGNPGAGGIGAVLRYKQHEKTLSKGYFQTTNNRMELRAVIEALNTLKEPCLITLYSDSQYMKNGITKWIFNWKKNNWKASSGKPVKNQDLWIALDESIQRHKINWQWVKGHAGHRENEICDELAKKGAENPTLEDMGYIEE.

The 142-residue stretch at 1–142 folds into the RNase H type-1 domain; the sequence is MPKQIEIFTD…CDELAKKGAE (142 aa). Aspartate 10, glutamate 48, aspartate 70, and aspartate 134 together coordinate Mg(2+).

Belongs to the RNase H family. In terms of assembly, monomer. It depends on Mg(2+) as a cofactor.

The protein resides in the cytoplasm. It carries out the reaction Endonucleolytic cleavage to 5'-phosphomonoester.. Functionally, endonuclease that specifically degrades the RNA of RNA-DNA hybrids. This chain is Ribonuclease HI (rnhA), found in Haemophilus influenzae (strain ATCC 51907 / DSM 11121 / KW20 / Rd).